A 129-amino-acid chain; its full sequence is Flagellar assembly factor FliW (129 aa).

This sequence belongs to the FliW family. In terms of assembly, interacts with translational regulator CsrA and flagellin(s).

It is found in the cytoplasm. Its function is as follows. Acts as an anti-CsrA protein, binds CsrA and prevents it from repressing translation of its target genes, one of which is flagellin. Binds to flagellin and participates in the assembly of the flagellum. This is Flagellar assembly factor FliW from Campylobacter jejuni subsp. doylei (strain ATCC BAA-1458 / RM4099 / 269.97).